Reading from the N-terminus, the 267-residue chain is 5'-methylthioadenosine nucleosidase (267 aa).

Glu-38 serves as the catalytic Proton acceptor. Residues Thr-116, 199-202 (KDME), and Asp-225 contribute to the S-methyl-5'-thioadenosine site. The adenine site is built by Lys-199 and Asp-225. Asp-225 acts as the Proton donor in catalysis.

It belongs to the PNP/UDP phosphorylase family. MtnN subfamily. As to quaternary structure, homodimer. Interacts with CBL3 in a calcium-dependent manner. As to expression, expressed in roots, leaves, stems, cauline leaves and flowers.

The enzyme catalyses S-methyl-5'-thioadenosine + H2O = 5-(methylsulfanyl)-D-ribose + adenine. It participates in amino-acid biosynthesis; L-methionine biosynthesis via salvage pathway; S-methyl-5-thio-alpha-D-ribose 1-phosphate from S-methyl-5'-thioadenosine (hydrolase route): step 1/2. Inhibited by CBL3 in a calcium-dependent manner. Inhibited by 5'-methylthiotubercidin (MTT) and by formycin A (FMA). In terms of biological role, enzyme of the methionine cycle that catalyzes the irreversible cleavage of the glycosidic bond in 5'-methylthioadenosine (MTA) to adenine and 5'-methylthioribose. Contributes to the maintenance of AdoMet homeostasis and is required to sustain high rates of ethylene synthesis. Inactive towards S-adenosylhomocysteine (SAH/AdoHcy). In Arabidopsis thaliana (Mouse-ear cress), this protein is 5'-methylthioadenosine nucleosidase (MTN1).